Here is a 658-residue protein sequence, read N- to C-terminus: MRFAIPLGAACAWAGVALAALQIAEDFSSITLNNDRFKAVWSKSKGSVVDMFLDGQDLLGPQSGSTGIGPYLDCYCVPSGFYTAGATNPRMQYVEGTDSTGTKYAGVILNDTYTPTGQQFQQYWFLRDGETGLHMFSRLAYYNETTPFLRNLQEFRTLFRPNTQLWTHLTSSELQTAPLPSKNAVSKQVVVQDATWRFNNTPDDAYYTQFSEYFTKYTFSNQWRDNDVHGLYGDGTNSNGSTYGAWLVMNTKGPLHSDLTVDGIVYNYIVSNHHGEGTPNITNGFDRTFGPQFYLFNGGKGSTSSLQDLRSEAAKLADPSWNAEFYDSIAKHVVGYVPSSKRGSVDGRIKLPKGASNPIAILTVDGQYFQDNSVVPSSYQYWTDIDTSGRFRIDRVVEGKYRLTVYADGIFGDFVRDGVTVRAGKTTTVKEKWDAESAGKEIWRLGTPDKSSGEFRHGVARDPTHPLHPPEYLIYWGAYDWQSDFPKGIDYTIGSSDPATDFNTVHWSVFGPTPDNPNVEYNTTHDWKINFSLTKKQLRNSKKATLTIQLAGAKTASGNTDEYKASEPYINLIHESYINDQKEPLSFVIGFNQSSSCIVRSAVSCYQVRSRMEFPADWLKVGENTLTLHLPYNATDTETAILPATVYVQYDALRLELD.

Residues 1 to 19 (MRFAIPLGAACAWAGVALA) form the signal peptide. N-linked (GlcNAc...) asparagine glycosylation is found at Asn110, Asn143, Asn239, Asn280, Asn522, Asn530, Asn592, and Asn633.

The protein belongs to the polysaccharide lyase 4 family.

It localises to the secreted. It catalyses the reaction Endotype eliminative cleavage of L-alpha-rhamnopyranosyl-(1-&gt;4)-alpha-D-galactopyranosyluronic acid bonds of rhamnogalacturonan I domains in ramified hairy regions of pectin leaving L-rhamnopyranose at the reducing end and 4-deoxy-4,5-unsaturated D-galactopyranosyluronic acid at the non-reducing end.. Its function is as follows. Pectinolytic enzymes consist of four classes of enzymes: pectin lyase, polygalacturonase, pectin methylesterase and rhamnogalacturonase. Degrades the rhamnogalacturonan I (RG-I) backbone of pectin. The sequence is that of Probable rhamnogalacturonate lyase B (rglB) from Aspergillus fumigatus (strain CBS 144.89 / FGSC A1163 / CEA10) (Neosartorya fumigata).